Here is a 98-residue protein sequence, read N- to C-terminus: Integration host factor subunit alpha (98 aa).

Residues 54 to 74 (LRDKASRPGRNPKTGENIPVS) form a disordered region.

It belongs to the bacterial histone-like protein family. Heterodimer of an alpha and a beta chain.

In terms of biological role, this protein is one of the two subunits of integration host factor, a specific DNA-binding protein that functions in genetic recombination as well as in transcriptional and translational control. This is Integration host factor subunit alpha from Actinobacillus succinogenes (strain ATCC 55618 / DSM 22257 / CCUG 43843 / 130Z).